The chain runs to 451 residues: Tubulin gamma-1 chain (451 aa).

Residue serine 131 is modified to Phosphoserine; by BRSK1. Residue 142–148 participates in GTP binding; the sequence is AGGTGSG.

The protein belongs to the tubulin family. Component of the gamma-tubulin ring complex (gTuRC) consisting of TUBGCP2, TUBGCP3, TUBGCP4, TUBGCP5 and TUBGCP6 and gamma-tubulin TUBG1 or TUBG2. TUBGCP2, TUBGCP3, TUBGCP4, TUBGCP5 and TUBGCP6 assemble in a 5:5:2:1:1 stoichiometry; each is associated with a gamma-tubulin, thereby arranging 14 gamma-tubulins in a helical manner. Gamma-tubulin at the first position is blocked by TUBGCP3 at the last position, allowing 13 protafilaments to grow into a microtubule. The gTuRC (via TUBGCP3 and TUBGCP6) interacts with ACTB and MZT1; the interactions form a luminal bridge that stabilizes the initial structure during complex assembly. The gTuRC (via TUBGCP2) interacts with MZT2A/MZT2B and CDK5RAP2 (via CM1 motif); the interactions play a role in gTuRC activation. Interacts with alpha-beta tubulin heterodimers; the interaction allows microtubules to nucleate from the gTuRC. Interacts with B9D2. Interacts with CDK5RAP2; the interaction is leading to centrosomal localization of TUBG1 and CDK5RAP2. Interacts with CIMAP3. Interacts with SAS6 and NUP62 at the centrosome. Interacts with EML3 (phosphorylated at 'Thr-881') and HAUS8. Interacts with DNM2; this interaction may participate in centrosome cohesion. Interacts with CCDC66. Post-translationally, phosphorylation at Ser-131 by BRSK1 regulates centrosome duplication, possibly by mediating relocation of gamma-tubulin and its associated proteins from the cytoplasm to the centrosome.

Its subcellular location is the cytoplasm. It is found in the cytoskeleton. The protein localises to the microtubule organizing center. The protein resides in the centrosome. It localises to the spindle. Tubulin is the major constituent of microtubules, protein filaments consisting of alpha- and beta-tubulin heterodimers. Gamma-tubulin is a key component of the gamma-tubulin ring complex (gTuRC) which mediates microtubule nucleation. The gTuRC regulates the minus-end nucleation of alpha-beta tubulin heterodimers that grow into microtubule protafilaments, a critical step in centrosome duplication and spindle formation. This Bos taurus (Bovine) protein is Tubulin gamma-1 chain.